We begin with the raw amino-acid sequence, 159 residues long: Ribosomal RNA large subunit methyltransferase H (159 aa).

Residues leucine 76 and glycine 108 each coordinate S-adenosyl-L-methionine.

Belongs to the RNA methyltransferase RlmH family. As to quaternary structure, homodimer.

Its subcellular location is the cytoplasm. It catalyses the reaction pseudouridine(1915) in 23S rRNA + S-adenosyl-L-methionine = N(3)-methylpseudouridine(1915) in 23S rRNA + S-adenosyl-L-homocysteine + H(+). Functionally, specifically methylates the pseudouridine at position 1915 (m3Psi1915) in 23S rRNA. This chain is Ribosomal RNA large subunit methyltransferase H, found in Levilactobacillus brevis (strain ATCC 367 / BCRC 12310 / CIP 105137 / JCM 1170 / LMG 11437 / NCIMB 947 / NCTC 947) (Lactobacillus brevis).